The following is a 29-amino-acid chain: Lambda-theraphotoxin-Ec2a (29 aa).

Intrachain disulfides connect C2–C16, C9–C21, and C15–C25.

The protein belongs to the neurotoxin 30 (phrixotoxin) family. In terms of tissue distribution, expressed by the venom gland.

Its subcellular location is the secreted. In terms of biological role, insect-selective neurotoxin that potently blocks insect calcium-activated potassium (BKCa) channels (Slo-type) in cockroach dorsal unpaired median (DUM) neurons (IC(50)=3.7 nM). This occurs in the absence of any shifts in the voltage dependence of activation. At high concentrations (330 nM), it partially inhibits cockroach delayed-rectifier potassium channels (Kv) currents. May interact with the turret and/or loop region of the external entrance to the channel and does not project deeply into the pore of the channel. In vivo, does not show toxicity in mice after intracerebroventricular injection of up to 25 pmol/g (1.8 ug/20 g mouse). The chain is Lambda-theraphotoxin-Ec2a from Eucratoscelus constrictus (African red-rump baboon spider).